Here is a 742-residue protein sequence, read N- to C-terminus: Alcohol dehydrogenase (quinone), dehydrogenase subunit (742 aa).

Positions 1 to 35 (MTRPASAKRRSLLGILAAGTICAAALPYAAVPARA) are cleaved as a signal peptide. Residue Glu96 participates in pyrroloquinoline quinone binding. The cysteines at positions 142 and 143 are disulfide-linked. Pyrroloquinoline quinone is bound at residue Arg148. A Ca(2+)-binding site is contributed by Glu216. Residue Thr278 participates in pyrroloquinoline quinone binding. Ca(2+)-binding residues include Asn298 and Asp343. The active-site Proton acceptor is the Asp343. Lys370 and Ile584 together coordinate pyrroloquinoline quinone. The Cytochrome c domain occupies 636-715 (KVVDNGYFQY…AIRQYLIKRA (80 aa)). Residues Cys649, Cys652, His653, and Met692 each contribute to the heme c site. Residues 722 to 732 (EVDARKNDKNI) are compositionally biased toward basic and acidic residues. The interval 722 to 742 (EVDARKNDKNIPENPTLGINP) is disordered.

The protein belongs to the bacterial PQQ dehydrogenase family. The alcohol dehydrogenase multicomponent enzyme system is composed of a dehydrogenase subunit I (AdhA) and a cytochrome c subunit II (AdhB). The cofactor is pyrroloquinoline quinone. Ca(2+) is required as a cofactor. It depends on heme c as a cofactor.

The protein localises to the cell membrane. The catalysed reaction is ethanol + a ubiquinone = a ubiquinol + acetaldehyde. Dehydrogenase component of the alcohol dehydrogenase multicomponent enzyme system which is involved in the production of acetic acid and in the ethanol oxidase respiratory chain. Quinohemoprotein alcohol dehydrogenase (ADH) catalyzes the oxidation of ethanol to acetaldehyde by transferring electrons to the ubiquinone embedded in the membrane phospholipids. The electrons transfer from ethanol to membranous ubiquinone occurs from pyrroloquinoline quinone (PQQ) to one heme c in subunit I (AdhA), and finally to two heme c in subunit II (AdhB). Besides ubiquinone reduction, ADH also has a ubiquinol (QH2) oxidation reaction which mediates electron transfer from ubiquinol to the non-energy generating bypass oxidase system. The electrons transfer occurs from ubiquinol (QH2) to the additional heme c within subunit II (AdhB). This Acetobacter aceti protein is Alcohol dehydrogenase (quinone), dehydrogenase subunit.